Consider the following 346-residue polypeptide: Anthranilate phosphoribosyltransferase (346 aa).

Residues G80, 83-84 (GD), T88, 90-93 (NIST), 108-116 (KHGNTAVSS), and S120 each bind 5-phospho-alpha-D-ribose 1-diphosphate. Residue G80 participates in anthranilate binding. S92 is a Mg(2+) binding site. An anthranilate-binding site is contributed by N111. R166 is an anthranilate binding site. Mg(2+) is bound by residues D225 and E226.

Belongs to the anthranilate phosphoribosyltransferase family. In terms of assembly, homodimer. Requires Mg(2+) as cofactor.

The enzyme catalyses N-(5-phospho-beta-D-ribosyl)anthranilate + diphosphate = 5-phospho-alpha-D-ribose 1-diphosphate + anthranilate. Its pathway is amino-acid biosynthesis; L-tryptophan biosynthesis; L-tryptophan from chorismate: step 2/5. Its function is as follows. Catalyzes the transfer of the phosphoribosyl group of 5-phosphorylribose-1-pyrophosphate (PRPP) to anthranilate to yield N-(5'-phosphoribosyl)-anthranilate (PRA). The protein is Anthranilate phosphoribosyltransferase of Desulforudis audaxviator (strain MP104C).